The primary structure comprises 238 residues: MPTSLKHLKISPKEAHTATVIFLHGLGDSGHGWLPVAKMLWSSFPNVKWILPHAPTIPVSLNHGMAMPSWFDIRHLDKLDNSENDDEQGMLETLKSVDELIQAEVDSGIPENRIVLGGFSQGGAISVLNMLTTKRKLAGVVALSTWVPLNHKIVQMMSEHAKDIPVFWGHGTNDPVVDYRFGQRSVDFLVQKCGYKLLSQGTTFARPGIRFESYPGMPHSSCPQEIEDLKSWLMEALK.

Active-site charge relay system residues include serine 120, aspartate 174, and histidine 219.

The protein belongs to the AB hydrolase superfamily. AB hydrolase 2 family.

It localises to the cytoplasm. It is found in the nucleus. The enzyme catalyses S-hexadecanoyl-L-cysteinyl-[protein] + H2O = L-cysteinyl-[protein] + hexadecanoate + H(+). In terms of biological role, hydrolyzes fatty acids from S-acylated cysteine residues in proteins with a strong preference for palmitoylated G-alpha proteins over other acyl substrates. Mediates the deacylation of G-alpha proteins such as GPA1 in vivo, but has weak or no activity toward palmitoylated Ras proteins. Has weak lysophospholipase activity in vitro; however such activity may not exist in vivo. The polypeptide is Acyl-protein thioesterase 1 (Cryptococcus neoformans var. neoformans serotype D (strain B-3501A) (Filobasidiella neoformans)).